The primary structure comprises 396 residues: MSTTVTVLTDTWSHRAKRLEGDAKILAIGTATPANWVDQTTYPDFYFRITNSEHLLEHKEKFRRICNKSKIMKRHLVITEELLKKNPNLCTYNEASLNTRQDILVSEVPKLGKDAAMKAIKEWGRPISEITHLVFCTTSGVDMPGADFQLTKLLGLNSSVKRLMMYQQGCNAGAAMLRLAKDLAENNKGGRVLVVCSEVMLSVFRGPSLQQEDNLLAQCLFGDGAAAVIVGTEPRPGLETPLFELVSAAQTTIPDTDSYLKLQLREMGLTFHCSKAVPSLITQNVEDCLVKAFEPFGISDWNSIFWILHPGGNAILDGVEEKLGLEPEKLRASRDVLSQYGNLTSACVLFILDEVRKKSKKDEQMTTGEGLEWGVVFGFGPGLTIDTVVIRSVPIN.

Cys-170 is a catalytic residue.

Belongs to the thiolase-like superfamily. Chalcone/stilbene synthases family.

The enzyme catalyses (E)-4-coumaroyl-CoA + 3 malonyl-CoA + 3 H(+) = 2',4,4',6'-tetrahydroxychalcone + 3 CO2 + 4 CoA. The protein operates within secondary metabolite biosynthesis; flavonoid biosynthesis. Its function is as follows. The primary product of this enzyme is 4,2',4',6'-tetrahydroxychalcone (also termed naringenin-chalcone or chalcone) which can under specific conditions spontaneously isomerize into naringenin. This Ipomoea purpurea (Common morning glory) protein is Chalcone synthase A (CHSA).